Reading from the N-terminus, the 211-residue chain is Protein FAM167A (211 aa).

Disordered regions lie at residues 1 to 30 and 56 to 108; these read MSVP…DHLR and EEQT…GKLE. A coiled-coil region spans residues 120–153; it reads LRKELMEMRLQDQQLARQLMRLRSDIHKLKIEQT.

It belongs to the FAM167 (SEC) family.

This chain is Protein FAM167A (FAM167A), found in Bos taurus (Bovine).